We begin with the raw amino-acid sequence, 270 residues long: MYTQIMTMYPLLISILHILFIISICQLCRYVSNVLVKHSLARIAIEEFICAVQLCATNFELGVITQIYGFSAYALGLFFCSFTYTFTFQDGTCDPSECYEKFCKREMSAREAVLRATFSIMGAAVSYRFAKIFWSFGLMATHMDFYKNESCDASLQVPVLIGLGFETFETIVNRLLQNMRHYNMLISAISDVCITFFGLFVSGGYFNPTLSFAMEYGCQGLSGPSFFLVYWFGPILGSSISLKIAKPLLRIIEGSDEAKVEVVDAKAHSD.

The next 2 helical transmembrane spans lie at 5-25 (IMTM…ISIC) and 59-79 (FELG…GLFF). Residues 94–96 (DPS) carry the NPA 1 motif. Residues 120–140 (IMGAAVSYRFAKIFWSFGLMA) form a helical membrane-spanning segment. Asn-148 carries N-linked (GlcNAc...) asparagine glycosylation. The next 2 membrane-spanning stretches (helical) occupy residues 153 to 173 (ASLQ…TIVN) and 184 to 204 (MLIS…VSGG). Positions 207–209 (NPT) match the NPA 2 motif. Residues 220–240 (GLSGPSFFLVYWFGPILGSSI) traverse the membrane as a helical segment.

The protein belongs to the MIP/aquaporin (TC 1.A.8) family.

Its subcellular location is the membrane. The catalysed reaction is H2O(in) = H2O(out). Probable intracellular unorthodox aquaporin that may modulate the water content and osmolytes during anhydrobiosis. This Milnesium tardigradum (Water bear) protein is Aquaporin-11.